The primary structure comprises 507 residues: ATP synthase subunit alpha, chloroplastic (507 aa).

Residue 170–177 (GDRQTGKT) coordinates ATP.

Belongs to the ATPase alpha/beta chains family. F-type ATPases have 2 components, CF(1) - the catalytic core - and CF(0) - the membrane proton channel. CF(1) has five subunits: alpha(3), beta(3), gamma(1), delta(1), epsilon(1). CF(0) has four main subunits: a, b, b' and c.

Its subcellular location is the plastid. The protein resides in the chloroplast thylakoid membrane. The catalysed reaction is ATP + H2O + 4 H(+)(in) = ADP + phosphate + 5 H(+)(out). Functionally, produces ATP from ADP in the presence of a proton gradient across the membrane. The alpha chain is a regulatory subunit. The polypeptide is ATP synthase subunit alpha, chloroplastic (Ranunculus macranthus (Large buttercup)).